The chain runs to 71 residues: ATP synthase subunit c (71 aa).

2 helical membrane-spanning segments follow: residues Ala-5–Val-25 and Phe-47–Leu-67.

It belongs to the ATPase C chain family. F-type ATPases have 2 components, F(1) - the catalytic core - and F(0) - the membrane proton channel. F(1) has five subunits: alpha(3), beta(3), gamma(1), delta(1), epsilon(1). F(0) has three main subunits: a(1), b(2) and c(10-14). The alpha and beta chains form an alternating ring which encloses part of the gamma chain. F(1) is attached to F(0) by a central stalk formed by the gamma and epsilon chains, while a peripheral stalk is formed by the delta and b chains.

The protein resides in the cell membrane. Functionally, f(1)F(0) ATP synthase produces ATP from ADP in the presence of a proton or sodium gradient. F-type ATPases consist of two structural domains, F(1) containing the extramembraneous catalytic core and F(0) containing the membrane proton channel, linked together by a central stalk and a peripheral stalk. During catalysis, ATP synthesis in the catalytic domain of F(1) is coupled via a rotary mechanism of the central stalk subunits to proton translocation. In terms of biological role, key component of the F(0) channel; it plays a direct role in translocation across the membrane. A homomeric c-ring of between 10-14 subunits forms the central stalk rotor element with the F(1) delta and epsilon subunits. The sequence is that of ATP synthase subunit c from Shouchella clausii (strain KSM-K16) (Alkalihalobacillus clausii).